The primary structure comprises 360 residues: Peptide chain release factor 1 (360 aa).

Q235 is subject to N5-methylglutamine. The disordered stretch occupies residues 285–313 (KRQQAEASTRRNLLGSGDRSDRNRTYNFP).

Belongs to the prokaryotic/mitochondrial release factor family. Post-translationally, methylated by PrmC. Methylation increases the termination efficiency of RF1.

The protein localises to the cytoplasm. In terms of biological role, peptide chain release factor 1 directs the termination of translation in response to the peptide chain termination codons UAG and UAA. In Shigella boydii serotype 18 (strain CDC 3083-94 / BS512), this protein is Peptide chain release factor 1.